Consider the following 278-residue polypeptide: Probable endonuclease 4 (278 aa).

9 residues coordinate Zn(2+): histidine 69, histidine 109, glutamate 145, aspartate 179, histidine 182, histidine 214, aspartate 227, histidine 229, and glutamate 259.

This sequence belongs to the AP endonuclease 2 family. Requires Zn(2+) as cofactor.

The enzyme catalyses Endonucleolytic cleavage to 5'-phosphooligonucleotide end-products.. In terms of biological role, endonuclease IV plays a role in DNA repair. It cleaves phosphodiester bonds at apurinic or apyrimidinic (AP) sites, generating a 3'-hydroxyl group and a 5'-terminal sugar phosphate. This chain is Probable endonuclease 4, found in Phocaeicola vulgatus (strain ATCC 8482 / DSM 1447 / JCM 5826 / CCUG 4940 / NBRC 14291 / NCTC 11154) (Bacteroides vulgatus).